The primary structure comprises 452 residues: Bifunctional protein GlmU (452 aa).

Residues 1 to 224 (MNIVILAAGQ…EWEVLGVNSK (224 aa)) form a pyrophosphorylase region. UDP-N-acetyl-alpha-D-glucosamine contacts are provided by residues 6–9 (LAAG), K20, Q71, 76–77 (GT), 98–100 (YGD), G134, E149, N164, and N222. D100 provides a ligand contact to Mg(2+). Residue N222 participates in Mg(2+) binding. The interval 225 to 245 (VQLAELERQHQLNLAGELLVA) is linker. Positions 246–452 (GVRLADPARI…GWERPKKVKK (207 aa)) are N-acetyltransferase. The UDP-N-acetyl-alpha-D-glucosamine site is built by R328 and K346. The Proton acceptor role is filled by H358. The UDP-N-acetyl-alpha-D-glucosamine site is built by Y361 and N372. Acetyl-CoA-binding positions include A375, 381-382 (NY), S400, A418, and R435.

In the N-terminal section; belongs to the N-acetylglucosamine-1-phosphate uridyltransferase family. This sequence in the C-terminal section; belongs to the transferase hexapeptide repeat family. As to quaternary structure, homotrimer. The cofactor is Mg(2+).

It localises to the cytoplasm. It catalyses the reaction alpha-D-glucosamine 1-phosphate + acetyl-CoA = N-acetyl-alpha-D-glucosamine 1-phosphate + CoA + H(+). It carries out the reaction N-acetyl-alpha-D-glucosamine 1-phosphate + UTP + H(+) = UDP-N-acetyl-alpha-D-glucosamine + diphosphate. It participates in nucleotide-sugar biosynthesis; UDP-N-acetyl-alpha-D-glucosamine biosynthesis; N-acetyl-alpha-D-glucosamine 1-phosphate from alpha-D-glucosamine 6-phosphate (route II): step 2/2. It functions in the pathway nucleotide-sugar biosynthesis; UDP-N-acetyl-alpha-D-glucosamine biosynthesis; UDP-N-acetyl-alpha-D-glucosamine from N-acetyl-alpha-D-glucosamine 1-phosphate: step 1/1. Its pathway is bacterial outer membrane biogenesis; LPS lipid A biosynthesis. Catalyzes the last two sequential reactions in the de novo biosynthetic pathway for UDP-N-acetylglucosamine (UDP-GlcNAc). The C-terminal domain catalyzes the transfer of acetyl group from acetyl coenzyme A to glucosamine-1-phosphate (GlcN-1-P) to produce N-acetylglucosamine-1-phosphate (GlcNAc-1-P), which is converted into UDP-GlcNAc by the transfer of uridine 5-monophosphate (from uridine 5-triphosphate), a reaction catalyzed by the N-terminal domain. This is Bifunctional protein GlmU from Dechloromonas aromatica (strain RCB).